Here is a 726-residue protein sequence, read N- to C-terminus: Catalase-peroxidase (726 aa).

Over residues 1–12 (MSTPSDQHNTLS) the composition is skewed to polar residues. The disordered stretch occupies residues 1–34 (MSTPSDQHNTLSAGKCPFHQGNSNQTAGGGTSSR). Residues 105–226 (WHSAGTYRSA…LGATEMGLIY (122 aa)) constitute a cross-link (tryptophyl-tyrosyl-methioninium (Trp-Tyr) (with M-252)). His106 functions as the Proton acceptor in the catalytic mechanism. Residues 226-252 (YVNPEGPNHSGDPASAAPAIRATFGNM) constitute a cross-link (tryptophyl-tyrosyl-methioninium (Tyr-Met) (with W-105)). His267 is a binding site for heme b.

This sequence belongs to the peroxidase family. Peroxidase/catalase subfamily. Homodimer or homotetramer. Heme b serves as cofactor. In terms of processing, formation of the three residue Trp-Tyr-Met cross-link is important for the catalase, but not the peroxidase activity of the enzyme.

The enzyme catalyses H2O2 + AH2 = A + 2 H2O. It carries out the reaction 2 H2O2 = O2 + 2 H2O. Bifunctional enzyme with both catalase and broad-spectrum peroxidase activity. This chain is Catalase-peroxidase, found in Cronobacter sakazakii (strain ATCC BAA-894) (Enterobacter sakazakii).